Reading from the N-terminus, the 302-residue chain is O-antigen biosynthesis glycosyltransferase WbnK (302 aa).

This sequence belongs to the glycosyltransferase 11 family.

It catalyses the reaction beta-D-Gal-(1-&gt;3)-alpha-D-GalNAc-(1-&gt;3)-alpha-D-GalNAc-di-trans,octa-cis-undecaprenyl diphosphate + GDP-beta-L-fucose = alpha-L-Fuc-(1-&gt;2)-beta-D-Gal-(1-&gt;3)-alpha-D-GalNAc-(1-&gt;3)-alpha-D-GalNAc-di-trans,octa-cis-undecaprenyl diphosphate + GDP + H(+). It functions in the pathway bacterial outer membrane biogenesis; LPS O-antigen biosynthesis. Its function is as follows. Involved in the assembly of the O-repeating unit during O-antigen biosynthesis. In Escherichia coli, this protein is O-antigen biosynthesis glycosyltransferase WbnK.